Here is an 82-residue protein sequence, read N- to C-terminus: ATP synthase subunit c, chloroplastic (82 aa).

2 consecutive transmembrane segments (helical) span residues 3-23 (PLIA…ASIG) and 57-77 (LAFM…LLFA).

This sequence belongs to the ATPase C chain family. In terms of assembly, F-type ATPases have 2 components, F(1) - the catalytic core - and F(0) - the membrane proton channel. F(1) has five subunits: alpha(3), beta(3), gamma(1), delta(1), epsilon(1). F(0) has four main subunits: a(1), b(1), b'(1) and c(10-14). The alpha and beta chains form an alternating ring which encloses part of the gamma chain. F(1) is attached to F(0) by a central stalk formed by the gamma and epsilon chains, while a peripheral stalk is formed by the delta, b and b' chains.

The protein resides in the plastid. It is found in the chloroplast thylakoid membrane. Functionally, f(1)F(0) ATP synthase produces ATP from ADP in the presence of a proton or sodium gradient. F-type ATPases consist of two structural domains, F(1) containing the extramembraneous catalytic core and F(0) containing the membrane proton channel, linked together by a central stalk and a peripheral stalk. During catalysis, ATP synthesis in the catalytic domain of F(1) is coupled via a rotary mechanism of the central stalk subunits to proton translocation. Key component of the F(0) channel; it plays a direct role in translocation across the membrane. A homomeric c-ring of between 10-14 subunits forms the central stalk rotor element with the F(1) delta and epsilon subunits. The chain is ATP synthase subunit c, chloroplastic from Nephroselmis olivacea (Green alga).